Reading from the N-terminus, the 751-residue chain is MSAEVSTTPAADNTVNGTPEATNPAATSAPEVTAVESASPSATPSANQPHSASLYVGELDPSVTEAMLYELFSSIGQVASIRVCRDAVTRRSLGYAYVNYNNTADGERALEDLNYTLIKGKPCRIMWSQRDPALRKTGQGNVFIKNLDAAIDNKALHDTFAAFGNILSCKVAQDEFGNSKGYGFVHYETAEAANNAIKHVNGMLLNDKKVFVGHHISKKDRQSKFEEMKANFTNVYIKNIDQEVTDEEFRKMFEKFGEITSATLSRDQEGKSRGFGFVNFSTHDSAQAAVDEMNDKEIKGQKLYVGRAQKKHEREEELRKQYEAARLEKASKYQGVNLYVKNLTDDVDDEKLRELFSPFGTITSAKVMRDTVTAGETSESEKEKESNKENEKEGEEKTEEKPKESEEEAKKTEKKILGKSKGFGFVCFSSPDEASKAVTEMNQRMVNGKPLYVALAQRKDVRRSQLEASIQARNTIRQQQAAAAAGMPQPYMQPAVFYGPGQQGFIPAGQRGGMPFAPQPGMVMGIPGGRPGQYPGPFPGQQGGRGMGPNQQIPPNFQGIPMGAMQGPGGIPNGMGYPQMAQVQFGRGAGGRGQVPGMPMGQGMRGPGYGQGRGGAPVQGGPRPQGGRGQPAAAPPAAGREEVPATGGLTAQTLNAVPPPQQKQMLGEALYPKIQAQQPELAGKITGMLLEMDNTELLGLLEDEEALRAKVDEALSVYDEYMKNKGEGEAPAEPAKPKEDAAETATEENKS.

Polar residues-rich tracts occupy residues 1–26 (MSAE…NPAA) and 36–50 (ESAS…NQPH). Positions 1–50 (MSAEVSTTPAADNTVNGTPEATNPAATSAPEVTAVESASPSATPSANQPH) are disordered. 4 RRM domains span residues 52–130 (ASLY…WSQR), 140–217 (GNVF…HHIS), 233–310 (TNVY…RAQK), and 336–458 (VNLY…LAQR). 2 disordered regions span residues 371–413 (TVTA…KKTE) and 601–643 (GQGM…REEV). The segment covering 379 to 413 (ESEKEKESNKENEKEGEEKTEEKPKESEEEAKKTE) has biased composition (basic and acidic residues). The span at 603–629 (GMRGPGYGQGRGGAPVQGGPRPQGGRG) shows a compositional bias: gly residues. The PABC domain maps to 646 to 723 (TGGLTAQTLN…ALSVYDEYMK (78 aa)). The interval 725-751 (KGEGEAPAEPAKPKEDAAETATEENKS) is disordered. The span at 735-751 (AKPKEDAAETATEENKS) shows a compositional bias: basic and acidic residues.

Belongs to the polyadenylate-binding protein type-1 family.

The protein localises to the cytoplasm. It is found in the nucleus. Binds the poly(A) tail of mRNA. Appears to be an important mediator of the multiple roles of the poly(A) tail in mRNA biogenesis, stability and translation. In the nucleus, involved in both mRNA cleavage and polyadenylation. Is also required for efficient mRNA export to the cytoplasm. Acts in concert with a poly(A)-specific nuclease (PAN) to affect poly(A) tail shortening, which may occur concomitantly with either nucleocytoplasmic mRNA transport or translational initiation. In the cytoplasm, stimulates translation initiation and regulates mRNA decay through translation termination-coupled poly(A) shortening, probably mediated by PAN. The chain is Polyadenylate-binding protein, cytoplasmic and nuclear (pab1) from Neosartorya fischeri (strain ATCC 1020 / DSM 3700 / CBS 544.65 / FGSC A1164 / JCM 1740 / NRRL 181 / WB 181) (Aspergillus fischerianus).